The primary structure comprises 134 residues: Profilin-2 (134 aa).

Thr114 carries the phosphothreonine modification.

The protein belongs to the profilin family. As to quaternary structure, occurs in many kinds of cells as a complex with monomeric actin in a 1:1 ratio. Post-translationally, phosphorylated by MAP kinases.

It is found in the cytoplasm. The protein localises to the cytoskeleton. Its function is as follows. Binds to actin and affects the structure of the cytoskeleton. At high concentrations, profilin prevents the polymerization of actin, whereas it enhances it at low concentrations. By binding to PIP2, it inhibits the formation of IP3 and DG. This is Profilin-2 (PRO2) from Nicotiana tabacum (Common tobacco).